Here is a 450-residue protein sequence, read N- to C-terminus: BAG family molecular chaperone regulator 5 (450 aa).

BAG domains lie at 9–86 (SIKR…EQNA), 95–167 (EAIF…ESCA), 182–260 (SVSK…DLDE), 275–350 (SILK…DLKE), and 365–442 (EHQS…YYLD).

Binds to the ATPase domain of HSP/HSC70 chaperones.

In terms of biological role, co-chaperone for HSP/HSP70 proteins. It functions as a nucleotide-exchange factor promoting the release of ADP from HSP70, thereby activating HSP70-mediated protein refolding. The protein is BAG family molecular chaperone regulator 5 (BAG5) of Gallus gallus (Chicken).